The chain runs to 187 residues: Superoxide dismutase [Cu-Zn] (187 aa).

The first 23 residues, 1–23 (MMKMKTLLALAISGICAAGVANA), serve as a signal peptide directing secretion. Positions 80, 82, and 105 each coordinate Cu cation. A disulfide bridge connects residues cysteine 87 and cysteine 183. Histidine 105, histidine 114, histidine 123, and aspartate 126 together coordinate Zn(2+). Histidine 161 is a Cu cation binding site.

It belongs to the Cu-Zn superoxide dismutase family. As to quaternary structure, homodimer. Cu cation serves as cofactor. It depends on Zn(2+) as a cofactor.

The protein resides in the periplasm. The catalysed reaction is 2 superoxide + 2 H(+) = H2O2 + O2. Functionally, destroys radicals which are normally produced within the cells and which are toxic to biological systems. May confer survival advantage by accelerating dismutation of superoxide of environmental origin to hydrogen peroxide, disruptive to the normal mucociliary clearance process in the host. This chain is Superoxide dismutase [Cu-Zn] (sodC), found in Haemophilus parainfluenzae.